The primary structure comprises 88 residues: Conotoxin tx9a (88 aa).

Residues 1–27 form the signal peptide; the sequence is MHLSLARSAVLMLLLLFALGNFVVVQS. Positions 28 to 58 are excised as a propeptide; it reads GQITRDVDNGQLTDNRRNLQSKWKPVSLYMS. Disulfide bonds link Cys62/Cys76, Cys66/Cys78, and Cys72/Cys83. Residues Glu68 and Glu73 each carry the 4-carboxyglutamate; partial modification. An Asparagine amide modification is found at Asn87.

Post-translationally, exists in 4 different forms, depending on gamma-carboxyglutamations. Tx9a-EE does not contain gamma-carboxyglutamate, tx9a-E/gamma has one gamma-carboxyglutamate at position 73, tx9a-gamma/E has one gamma-carboxyglutamate at position 68, and tx9a-agmma/gamma has two gamma-carboxyglutamates at positions 68 and 73. As to expression, expressed by the venom duct. All different gamma-carboxyalted forms are mostly present in part 2, part 3 and part 4 of the venom duct. They are also found in part 1 (proximal part near the venom bulb) and part 5, but in lower quantity.

It localises to the secreted. Its function is as follows. Neurotoxin. In vivo, intracranial injection into mice of 10 pmol/g of the peptide induces running in circles and hyperactivity. At higher doses (50 pmol/g), the mice exhibit running and climbing symptoms for close to one hour. Between 130 and 150 pmol/g, characteristic 'spasmodic' symptomatology is elicited. A hand clap would make mice jump high and start running rapidly. When exposed to a loud hand clap, or if the cage cover were dropped, the mice lose motor control and exhibit seizure-like symptoms from which they eventually recover. At the highest doses tested (over 250 pmol/g), after the characteristic spasmodic symptomatology, lethality occurs. Injection of a similar dose range intramuscularly into Siamese fighting fish elicited no unusual symptomatology. The chain is Conotoxin tx9a from Conus textile (Cloth-of-gold cone).